Reading from the N-terminus, the 504-residue chain is ATP synthase subunit alpha, chloroplastic (504 aa).

170-177 provides a ligand contact to ATP; the sequence is GDRQTGKT.

It belongs to the ATPase alpha/beta chains family. F-type ATPases have 2 components, CF(1) - the catalytic core - and CF(0) - the membrane proton channel. CF(1) has five subunits: alpha(3), beta(3), gamma(1), delta(1), epsilon(1). CF(0) has four main subunits: a, b, b' and c.

Its subcellular location is the plastid. It is found in the chloroplast thylakoid membrane. It catalyses the reaction ATP + H2O + 4 H(+)(in) = ADP + phosphate + 5 H(+)(out). Its function is as follows. Produces ATP from ADP in the presence of a proton gradient across the membrane. The alpha chain is a regulatory subunit. This chain is ATP synthase subunit alpha, chloroplastic, found in Cyanidium caldarium (Red alga).